The sequence spans 270 residues: Regulatory protein RecX (270 aa).

This sequence belongs to the RecX family.

It is found in the cytoplasm. Its function is as follows. Modulates RecA activity. The protein is Regulatory protein RecX of Bacillus cereus (strain ZK / E33L).